Here is a 308-residue protein sequence, read N- to C-terminus: Uricase-2 (308 aa).

Active-site charge relay system residues include lysine 17 and threonine 63. Residues threonine 63, aspartate 64, phenylalanine 165, arginine 182, valine 237, glutamine 238, and asparagine 264 each coordinate urate. The active-site Charge relay system is the histidine 266. Positions 306–308 (SKL) match the Microbody targeting signal motif.

It belongs to the uricase family. Homotetramer. Expressed predominantly in the uninfected cells of the central tissue of the root nodule. Also expressed in the nodule parenchyma cells and vascular tissue, in the roots, stems and leaves of uninfected adult plants, and in the cotyledons, roots and hypocotyls of developing seedlings. Localized to the metaxylem parenchyma cells and phloem fibers of developing roots.

It is found in the peroxisome. It catalyses the reaction urate + O2 + H2O = 5-hydroxyisourate + H2O2. Its pathway is purine metabolism; urate degradation; (S)-allantoin from urate: step 1/3. Its function is as follows. Catalyzes the oxidation of uric acid to 5-hydroxyisourate, which is further processed to form (S)-allantoin. This is Uricase-2 (URIII) from Phaseolus vulgaris (Kidney bean).